The sequence spans 199 residues: Inner membrane protein E199L (199 aa).

An N-linked (GlcNAc...) asparagine; by host glycan is attached at Asn131. The chain crosses the membrane as a helical span at residues 150 to 170 (INVMNHPFLTLILIILILIII).

The protein belongs to the asfivirus E199L family. Interacts with host PYCR2; this interaction results in autophagy activation. Post-translationally, contains intramolecular disulfide bonds.

It is found in the virion membrane. Its subcellular location is the host membrane. In terms of biological role, essential for viral fusion with host endosomal membrane and core release. Not required for virus morphogenesis and egress. Induces complete autophagy through the interaction with and down-regulation of host PYCR2. In African swine fever virus (isolate Tick/South Africa/Pretoriuskop Pr4/1996) (ASFV), this protein is Inner membrane protein E199L.